The primary structure comprises 186 residues: Putative 5'(3')-deoxyribonucleotidase (186 aa).

It belongs to the 5'(3')-deoxyribonucleotidase family. Mg(2+) is required as a cofactor.

Dephosphorylates the 5' and 2'(3')-phosphates of deoxyribonucleotides. The chain is Putative 5'(3')-deoxyribonucleotidase from Bordetella parapertussis (strain 12822 / ATCC BAA-587 / NCTC 13253).